A 153-amino-acid chain; its full sequence is NAD(P)H-quinone oxidoreductase subunit N (153 aa).

This sequence belongs to the complex I NdhN subunit family. In terms of assembly, NDH-1 can be composed of about 15 different subunits; different subcomplexes with different compositions have been identified which probably have different functions.

It is found in the cellular thylakoid membrane. It carries out the reaction a plastoquinone + NADH + (n+1) H(+)(in) = a plastoquinol + NAD(+) + n H(+)(out). The catalysed reaction is a plastoquinone + NADPH + (n+1) H(+)(in) = a plastoquinol + NADP(+) + n H(+)(out). Its function is as follows. NDH-1 shuttles electrons from an unknown electron donor, via FMN and iron-sulfur (Fe-S) centers, to quinones in the respiratory and/or the photosynthetic chain. The immediate electron acceptor for the enzyme in this species is believed to be plastoquinone. Couples the redox reaction to proton translocation, and thus conserves the redox energy in a proton gradient. Cyanobacterial NDH-1 also plays a role in inorganic carbon-concentration. In Prochlorococcus marinus (strain MIT 9211), this protein is NAD(P)H-quinone oxidoreductase subunit N.